The chain runs to 625 residues: tRNA uridine 5-carboxymethylaminomethyl modification enzyme MnmG (625 aa).

11 to 16 (GAGHAG) serves as a coordination point for FAD. Position 271 to 285 (271 to 285 (GPRYCPSIETKIVTF)) interacts with NAD(+).

This sequence belongs to the MnmG family. As to quaternary structure, homodimer. Heterotetramer of two MnmE and two MnmG subunits. Requires FAD as cofactor.

Its subcellular location is the cytoplasm. NAD-binding protein involved in the addition of a carboxymethylaminomethyl (cmnm) group at the wobble position (U34) of certain tRNAs, forming tRNA-cmnm(5)s(2)U34. The polypeptide is tRNA uridine 5-carboxymethylaminomethyl modification enzyme MnmG (Parabacteroides distasonis (strain ATCC 8503 / DSM 20701 / CIP 104284 / JCM 5825 / NCTC 11152)).